We begin with the raw amino-acid sequence, 377 residues long: 3-(aryl)acrylate reductase (377 aa).

Residues 121-130 (FALTEPGAGS), 154-156 (FIT), arginine 266, glutamine 277, and 334-338 (QIHGG) each bind FAD. The active-site Proton acceptor is the glutamate 361. 363-365 (TSE) serves as a coordination point for FAD.

It belongs to the acyl-CoA dehydrogenase family. It depends on FAD as a cofactor.

It carries out the reaction 3-phenylpropanoate + oxidized [electron-transfer flavoprotein] + H(+) = (E)-cinnamate + reduced [electron-transfer flavoprotein]. The enzyme catalyses phloretate + oxidized [electron-transfer flavoprotein] + H(+) = (E)-4-coumarate + reduced [electron-transfer flavoprotein]. The catalysed reaction is indole-3-propanoate + oxidized [electron-transfer flavoprotein] + H(+) = (E)-3-(indol-3-yl)acrylate + reduced [electron-transfer flavoprotein]. Its pathway is amino-acid degradation. Functionally, essential for the reductive metabolism of L-phenylalanine, L-tyrosine and L-tryptophan. Catalyzes the reduction of phenylacrylic acid to phenylpropionic acid, 4-hydroxy-phenylacrylic acid to 4-hydroxy-phenylpropionic acid, and indoleacrylic acid to indolepropionic acid. This Clostridium sporogenes (strain ATCC 15579) protein is 3-(aryl)acrylate reductase.